The chain runs to 41 residues: Alpha-conotoxin TxIB (41 aa).

The propeptide occupies 1–20 (FDGRNTSANNKATDLMALPV). 2 disulfide bridges follow: cysteine 23-cysteine 29 and cysteine 24-cysteine 37. Residues 25–27 (SDP) form a ser-Xaa-Pro motif, crucial for potent interaction with nAChR region. Position 37 is a cysteine amide; in Alpha-conotoxin TxIB (cysteine 37). Residues 39–41 (GRR) constitute a propeptide that is removed on maturation.

This sequence belongs to the conotoxin A superfamily. As to expression, expressed by the venom duct.

Its subcellular location is the secreted. Functionally, alpha-conotoxins act on postsynaptic membranes, they bind to the nicotinic acetylcholine receptors (nAChR) and thus inhibit them. This conotoxin is a subtype-specific blocker of alpha-6/alpha-3-beta-2-beta-3 (CHRNA6/CHRNA3-CHRNB2-CHRNB3) nAChRs nicotinic acetylcholine receptors (nAChRs) (IC(50)=28.4 nM). The sequence is that of Alpha-conotoxin TxIB from Conus textile (Cloth-of-gold cone).